The sequence spans 586 residues: U-box domain-containing protein 73 (586 aa).

Positions 21 to 122 are disordered; that stretch reads KADMSGLQRS…AAGADDGPTR (102 aa). Over residues 50-60 the composition is skewed to low complexity; that stretch reads RSAPTSPLRTP. The region spanning 182 to 258 is the U-box domain; that stretch reads PIPIAHDGTL…SAWCLDHSDL (77 aa).

The enzyme catalyses S-ubiquitinyl-[E2 ubiquitin-conjugating enzyme]-L-cysteine + [acceptor protein]-L-lysine = [E2 ubiquitin-conjugating enzyme]-L-cysteine + N(6)-ubiquitinyl-[acceptor protein]-L-lysine.. It functions in the pathway protein modification; protein ubiquitination. In terms of biological role, possesses E3 ubiquitin-protein ligase in vitro. The protein is U-box domain-containing protein 73 (PUB73) of Oryza sativa subsp. japonica (Rice).